We begin with the raw amino-acid sequence, 461 residues long: Trimethylamine monooxygenase (461 aa).

7 residues coordinate FAD: S14, E39, K40, Q41, M47, W48, and H64. The NADP(+) site is built by W72 and N74. The FAD site is built by N74 and A127. Residues S206, S207, S209, R230, and T231 each contribute to the NADP(+) site. The FAD site is built by Q319 and T322. R413 serves as a coordination point for NADP(+).

The protein belongs to the FMO family. FAD is required as a cofactor.

It catalyses the reaction trimethylamine + NADPH + O2 = trimethylamine N-oxide + NADP(+) + H2O. Its function is as follows. Catalyzes the oxidation of trimethylamine (TMA) to produce trimethylamine N-oxide (TMAO). The produced TMAO is accumulated in the cell, functioning as a piezolyte, improving both growth and survival at high hydrostatic pressure (HHP). The polypeptide is Trimethylamine monooxygenase (Myroides profundi).